The chain runs to 182 residues: tRNA-splicing endonuclease (182 aa).

Active-site residues include tyrosine 119, histidine 127, and lysine 158.

The protein belongs to the tRNA-intron endonuclease family. Archaeal short subfamily. In terms of assembly, homotetramer; although the tetramer contains four active sites, only two participate in the cleavage. Therefore, it should be considered as a dimer of dimers.

The enzyme catalyses pretRNA = a 3'-half-tRNA molecule with a 5'-OH end + a 5'-half-tRNA molecule with a 2',3'-cyclic phosphate end + an intron with a 2',3'-cyclic phosphate and a 5'-hydroxyl terminus.. Endonuclease that removes tRNA introns. Cleaves pre-tRNA at the 5'- and 3'-splice sites to release the intron. The products are an intron and two tRNA half-molecules bearing 2',3' cyclic phosphate and 5'-OH termini. Recognizes a pseudosymmetric substrate in which 2 bulged loops of 3 bases are separated by a stem of 4 bp. The protein is tRNA-splicing endonuclease of Saccharolobus islandicus (strain L.S.2.15 / Lassen #1) (Sulfolobus islandicus).